We begin with the raw amino-acid sequence, 312 residues long: Acetylglutamate kinase (312 aa).

Residues 76 to 77, Arg-98, and Asn-199 contribute to the substrate site; that span reads GG.

It belongs to the acetylglutamate kinase family. ArgB subfamily.

It is found in the cytoplasm. The catalysed reaction is N-acetyl-L-glutamate + ATP = N-acetyl-L-glutamyl 5-phosphate + ADP. It functions in the pathway amino-acid biosynthesis; L-arginine biosynthesis; N(2)-acetyl-L-ornithine from L-glutamate: step 2/4. Its function is as follows. Catalyzes the ATP-dependent phosphorylation of N-acetyl-L-glutamate. This chain is Acetylglutamate kinase, found in Beutenbergia cavernae (strain ATCC BAA-8 / DSM 12333 / CCUG 43141 / JCM 11478 / NBRC 16432 / NCIMB 13614 / HKI 0122).